The chain runs to 487 residues: MAIAEWRQQLESGEVSARELTDHHLARIKAVDSSVHAFLEVTADRARADADRLDEARAAGEDLPPLAGVPIAIKDNLCTKGIRTTSSSRMLESFVPPYESTVTDRLWRSGAVLIGKTNLDEFAMGGSTETSAFGPTANPWNTGYVPGGSSGGSAAAVAAGECMASLGSDTGGSIRQPASFCGVVGLKPTYGRVSRYGLVAFASSLDQVGPFATSVSDAAELLQAIAGEDPRDSTCLKAPVPNYREVLGRSVSGLRIGVVRECFDQEGIDPQVKASVLAAAELLQSLGAELVDVSCPRFNDGIATYYVIAPSEASANLARYDGVKYGFRAEDASSLASMTARSRTEGFGSEVQRRILIGTYALSAGYVDAYYRKAQQVRTLIRRDFETAFASVDVLLTPTAPSTAFAAGAHADDPLAMYLADLLTIPANLAGLPAINVPCGFDSEGLPIGVQLIGNVLEEPLLLQVAHQYEQSADVMSRRPEGAFIPV.

Residues K74 and S149 each act as charge relay system in the active site. S173 acts as the Acyl-ester intermediate in catalysis.

The protein belongs to the amidase family. GatA subfamily. In terms of assembly, heterotrimer of A, B and C subunits.

The enzyme catalyses L-glutamyl-tRNA(Gln) + L-glutamine + ATP + H2O = L-glutaminyl-tRNA(Gln) + L-glutamate + ADP + phosphate + H(+). Its function is as follows. Allows the formation of correctly charged Gln-tRNA(Gln) through the transamidation of misacylated Glu-tRNA(Gln) in organisms which lack glutaminyl-tRNA synthetase. The reaction takes place in the presence of glutamine and ATP through an activated gamma-phospho-Glu-tRNA(Gln). This is Glutamyl-tRNA(Gln) amidotransferase subunit A from Synechococcus sp. (strain CC9311).